We begin with the raw amino-acid sequence, 378 residues long: Chaperone protein DnaJ (378 aa).

One can recognise a J domain in the interval 5–70 (DYYEVLSVGR…DKKAAYDQFG (66 aa)). The CR-type zinc-finger motif lies at 133–211 (GLTKELRIPT…CHGEGRVEKS (79 aa)). Cysteine 146, cysteine 149, cysteine 163, cysteine 166, cysteine 185, cysteine 188, cysteine 199, and cysteine 202 together coordinate Zn(2+). CXXCXGXG motif repeat units lie at residues 146-153 (CDTCDGSG), 163-170 (CGTCHGQG), 185-192 (CPTCHGRG), and 199-206 (CNSCHGEG).

Belongs to the DnaJ family. As to quaternary structure, homodimer. The cofactor is Zn(2+).

The protein localises to the cytoplasm. Functionally, participates actively in the response to hyperosmotic and heat shock by preventing the aggregation of stress-denatured proteins and by disaggregating proteins, also in an autonomous, DnaK-independent fashion. Unfolded proteins bind initially to DnaJ; upon interaction with the DnaJ-bound protein, DnaK hydrolyzes its bound ATP, resulting in the formation of a stable complex. GrpE releases ADP from DnaK; ATP binding to DnaK triggers the release of the substrate protein, thus completing the reaction cycle. Several rounds of ATP-dependent interactions between DnaJ, DnaK and GrpE are required for fully efficient folding. Also involved, together with DnaK and GrpE, in the DNA replication of plasmids through activation of initiation proteins. The chain is Chaperone protein DnaJ from Shewanella woodyi (strain ATCC 51908 / MS32).